A 119-amino-acid polypeptide reads, in one-letter code: Probable non-functional T cell receptor gamma variable 10 (119 aa).

An N-terminal signal peptide occupies residues 1–19 (MSLLEAFAFSSWALGLGLS). Residues 24–119 (FQLSISTEVK…MAVYYCAAWD (96 aa)) form the Ig-like domain. An intrachain disulfide couples Cys-40 to Cys-115.

Gamma-delta TR is a heterodimer composed of a gamma and delta chain; disulfide-linked. The gamma-delta TR is associated with the transmembrane signaling CD3 coreceptor proteins following the stoichiometry: a single gamma-delta TR heterodimer associates with one CD3D-CD3E heterodimer, one CD3G-CD3E heterodimer and one CD247 homodimer forming a stable octameric structure. Upon activation, gamma-delta TR complex associates with FCER1G to initiate intracellular signaling.

The protein localises to the cell membrane. Functionally, probable non-functional open reading frame (ORF) of V region of the variable domain of T cell receptor (TR) gamma chain. Non-functional ORF generally cannot participate in the synthesis of a productive T cell receptor (TR) chain due to altered V-(D)-J or switch recombination and/or splicing site (at mRNA level) and/or conserved amino acid change (protein level). Gamma-delta TRs recognize a variety of self and foreign non-peptide antigens frequently expressed at the epithelial boundaries between the host and external environment, including endogenous lipids presented by MH-like protein CD1D and phosphoantigens presented by butyrophilin-like molecule BTN3A1. Upon antigen recognition induces rapid, innate-like immune responses involved in pathogen clearance and tissue repair. Binding of gamma-delta TR complex to antigen triggers phosphorylation of immunoreceptor tyrosine-based activation motifs (ITAMs) in the CD3 chains by the LCK and FYN kinases, allowing the recruitment, phosphorylation, and activation of ZAP70 that facilitates phosphorylation of the scaffolding proteins LCP2 and LAT. This lead to the formation of a supramolecular signalosome that recruits the phospholipase PLCG1, resulting in calcium mobilization and ERK activation, ultimately leading to T cell expansion and differentiation into effector cells. Gamma-delta TRs are produced through somatic rearrangement of a limited repertoire of variable (V), diversity (D), and joining (J) genes. The potential diversity of gamma-delta TRs is conferred by the unique ability to rearrange (D) genes in tandem and to utilize all three reading frames. The combinatorial diversity is considerably increased by the sequence exonuclease trimming and random nucleotide (N) region additions which occur during the V-(D)-J rearrangements. This chain is Probable non-functional T cell receptor gamma variable 10, found in Homo sapiens (Human).